The chain runs to 760 residues: Molybdenum cofactor sulfurase 2 (760 aa).

Lys-223 is subject to N6-(pyridoxal phosphate)lysine. The active site involves Cys-389. Residues 608-758 form the MOSC domain; it reads QSDDEARTLR…LHCGSPLQVV (151 aa).

It belongs to the class-V pyridoxal-phosphate-dependent aminotransferase family. MOCOS subfamily. It depends on pyridoxal 5'-phosphate as a cofactor.

The enzyme catalyses Mo-molybdopterin + L-cysteine + AH2 = thio-Mo-molybdopterin + L-alanine + A + H2O. Its function is as follows. Sulfurates the molybdenum cofactor. Sulfation of molybdenum is essential for xanthine dehydrogenase (XDH) and aldehyde oxidase (ADO) enzymes in which molybdenum cofactor is liganded by 1 oxygen and 1 sulfur atom in active form. This is Molybdenum cofactor sulfurase 2 from Culex quinquefasciatus (Southern house mosquito).